We begin with the raw amino-acid sequence, 146 residues long: 3-dehydroquinate dehydratase (146 aa).

Y22 serves as the catalytic Proton acceptor. Positions 74, 80, and 87 each coordinate substrate. The Proton donor role is filled by H100. Substrate-binding positions include 101 to 102 and R111; that span reads LS.

Belongs to the type-II 3-dehydroquinase family. As to quaternary structure, homododecamer.

The catalysed reaction is 3-dehydroquinate = 3-dehydroshikimate + H2O. The protein operates within metabolic intermediate biosynthesis; chorismate biosynthesis; chorismate from D-erythrose 4-phosphate and phosphoenolpyruvate: step 3/7. Catalyzes a trans-dehydration via an enolate intermediate. This chain is 3-dehydroquinate dehydratase, found in Clostridium perfringens (strain 13 / Type A).